The primary structure comprises 367 residues: DNA replication and repair protein RecF (367 aa).

An ATP-binding site is contributed by G30–T37.

Belongs to the RecF family.

It is found in the cytoplasm. Its function is as follows. The RecF protein is involved in DNA metabolism; it is required for DNA replication and normal SOS inducibility. RecF binds preferentially to single-stranded, linear DNA. It also seems to bind ATP. This Pseudomonas entomophila (strain L48) protein is DNA replication and repair protein RecF.